The primary structure comprises 390 residues: Dual-specificity RNA methyltransferase RlmN (390 aa).

The Proton acceptor role is filled by Glu110. The region spanning 116-355 is the Radical SAM core domain; that stretch reads EADRATLCVS…VIIRKTRGDD (240 aa). Cys123 and Cys360 form a disulfide bridge. [4Fe-4S] cluster-binding residues include Cys130, Cys134, and Cys137. S-adenosyl-L-methionine-binding positions include 184 to 185, Ser216, 238 to 240, and Asn317; these read GE and SLH. Residue Cys360 is the S-methylcysteine intermediate of the active site.

It belongs to the radical SAM superfamily. RlmN family. The cofactor is [4Fe-4S] cluster.

The protein localises to the cytoplasm. The enzyme catalyses adenosine(2503) in 23S rRNA + 2 reduced [2Fe-2S]-[ferredoxin] + 2 S-adenosyl-L-methionine = 2-methyladenosine(2503) in 23S rRNA + 5'-deoxyadenosine + L-methionine + 2 oxidized [2Fe-2S]-[ferredoxin] + S-adenosyl-L-homocysteine. It carries out the reaction adenosine(37) in tRNA + 2 reduced [2Fe-2S]-[ferredoxin] + 2 S-adenosyl-L-methionine = 2-methyladenosine(37) in tRNA + 5'-deoxyadenosine + L-methionine + 2 oxidized [2Fe-2S]-[ferredoxin] + S-adenosyl-L-homocysteine. Specifically methylates position 2 of adenine 2503 in 23S rRNA and position 2 of adenine 37 in tRNAs. m2A2503 modification seems to play a crucial role in the proofreading step occurring at the peptidyl transferase center and thus would serve to optimize ribosomal fidelity. This chain is Dual-specificity RNA methyltransferase RlmN, found in Haemophilus influenzae (strain 86-028NP).